A 120-amino-acid chain; its full sequence is Cytochrome c6 (120 aa).

The N-terminal stretch at 1 to 35 (MFKLFNQASRIFFGIALPCLIFLGGIFSLGNTALA) is a signal peptide. 4 residues coordinate heme c: C49, C52, H53, and M93.

Belongs to the cytochrome c family. PetJ subfamily. In terms of assembly, monomer. Binds 1 heme c group covalently per subunit.

The protein resides in the cellular thylakoid lumen. In terms of biological role, functions as an electron carrier between membrane-bound cytochrome b6-f and photosystem I in oxygenic photosynthesis. This chain is Cytochrome c6 (petJ), found in Synechocystis sp. (strain ATCC 27184 / PCC 6803 / Kazusa).